The chain runs to 1087 residues: Synaptopodin-2 (1087 aa).

A PDZ domain is found at 6–88 (FICISMTGGA…SLHLLVKRPS (83 aa)). 3 disordered regions span residues 24–52 (GKEE…EGDE), 88–112 (SSGT…HEGP), and 207–272 (GPIV…AGLP). Basic and acidic residues predominate over residues 101–112 (TTNHQHLTHEGP). Composition is skewed to polar residues over residues 207–230 (GPIV…SQLE) and 246–255 (TSLTSSTSSG). Ser300, Ser319, and Ser320 each carry phosphoserine. The tract at residues 320–359 (SEGTEHGEDQRSGKDQSRPHKHRARHARLRRSESLSEKQV) is disordered. Residues 322-337 (GTEHGEDQRSGKDQSR) are compositionally biased toward basic and acidic residues. Thr323 is modified (phosphothreonine). Over residues 338–348 (PHKHRARHARL) the composition is skewed to basic residues. The segment covering 349–359 (RRSESLSEKQV) has biased composition (basic and acidic residues). The short motif at 388–396 (KKRRRRARK) is the Nuclear localization signal element. Phosphoserine is present on residues Ser540, Ser541, Ser543, and Ser546. The interval 551 to 557 (RSLASVP) is interaction with YWHAB. Ser555 bears the Phosphoserine; by PKA mark. 2 disordered regions span residues 581–817 (AKPF…ALNL) and 832–863 (NYTP…GMSG). Ser596 carries the post-translational modification Phosphoserine. Residues 599-804 (RSVTSPISDF…AVSSIKIAQP (206 aa)) are interaction with YWHAB. At Thr602 the chain carries Phosphothreonine; by PKA and CaMK2. The residue at position 603 (Ser603) is a Phosphoserine. Pro residues-rich tracts occupy residues 609-622 (PAPP…PPPE) and 636-647 (AQPPPWPQPAPW). The short motif at 611-614 (PPPY) is the PPPY motif element. Residue Tyr614 is modified to Phosphotyrosine. Ser618 carries the phosphoserine modification. The segment at 656–796 (SEQIASRDER…PPNPPQVTAV (141 aa)) is F-actin binding. Positions 656 to 909 (SEQIASRDER…LPASWKYSSN (254 aa)) are F-actin bundling activity. Interaction with ACTN2 regions lie at residues 656-917 (SEQI…PPVA) and 894-1087 (QSPT…VVEE). Residues Ser697 and Ser719 each carry the phosphoserine modification. Positions 740-893 (AKQKTPPPVA…DTVQAHTVRA (154 aa)) are actin binding. Thr744 carries the post-translational modification Phosphothreonine. Low complexity predominate over residues 751-777 (KPAVKSPSSSQPVAPVSPVWSPGVAPA). Ser767 and Ser771 each carry phosphoserine. A compositionally biased stretch (polar residues) spans 781–797 (AFSTSNPPNPPQVTAVS). The segment at 803–1087 (QPAAPPARPA…QVWKPSVVEE (285 aa)) is interaction with FLNC. A phosphoserine mark is found at Ser895, Ser899, and Ser903. 3 disordered regions span residues 930–952 (AIKS…KKPL), 970–1012 (FTFQ…PTNA), and 1037–1060 (PVSA…STSY). Residues 993–1012 (PAMKQALPPRQANVGSPTNA) form an interaction with ZYX region. 2 positions are modified to phosphoserine: Ser1008 and Ser1050. The span at 1037 to 1051 (PVSASPVPVSVPTSP) shows a compositional bias: low complexity.

It belongs to the synaptopodin family. In terms of assembly, may self-associate in muscle cells under oxidative stress. Binds F-actin. Interacts with ACTN2; ACTN2 is proposed to anchor SYOP2 at Z lines in mature myocytes. Interacts with AKAP6, PPP3CA and CAMK2A. Interacts (phosphorylated form) with YWHAB; YWHAB competes with ACTN2 for interaction with SYNPO2. Interacts with KPNA2; mediating nuclear import of SYNOP2; dependent on interaction with YWHAB. Interacts with IPO13; may be implicated in SYNOP2 nuclear import. Interacts with ZYX, FLNC, ILK. Interacts with BAG3 (via WW 1 domain). May associate with the CASA complex consisting of HSPA8, HSPB8 and BAG3. Interacts with VPS18. In terms of processing, phosphorylated by PKA, and by CaMK2 at multiple sites. Dephosphorylated by calcineurin at Ser-555 and Thr-602; abrogating interaction with YWHAB and impairing nuclear import. As to expression, expressed in skeletal muscle, heart, colon, stomach, uterus and lung. Expression is restricted to muscle cell layers in colon, uterus and stomach.

Its subcellular location is the nucleus. The protein resides in the cytoplasm. The protein localises to the myofibril. It is found in the sarcomere. It localises to the z line. Its subcellular location is the cell junction. The protein resides in the focal adhesion. In terms of biological role, has an actin-binding and actin-bundling activity. Can induce the formation of F-actin networks. At the sarcomeric Z lines is proposed to act as adapter protein that links nascent myofibers to the sarcolemma via ZYX and may play a role in early assembly and stabilization of the Z lines. Involved in autophagosome formation. May play a role in chaperone-assisted selective autophagy (CASA) involved in Z lines maintenance in striated muscle under mechanical tension; may link the client-processing CASA chaperone machinery to a membrane-tethering and fusion complex providing autophagosome membranes. Involved in regulation of cell migration. May be a tumor suppressor. The chain is Synaptopodin-2 (Synpo2) from Mus musculus (Mouse).